Reading from the N-terminus, the 222-residue chain is Deoxyribose-phosphate aldolase (222 aa).

Asp89 functions as the Proton donor/acceptor in the catalytic mechanism. Catalysis depends on Lys152, which acts as the Schiff-base intermediate with acetaldehyde. The active-site Proton donor/acceptor is the Lys181.

It belongs to the DeoC/FbaB aldolase family. DeoC type 1 subfamily.

Its subcellular location is the cytoplasm. It carries out the reaction 2-deoxy-D-ribose 5-phosphate = D-glyceraldehyde 3-phosphate + acetaldehyde. The protein operates within carbohydrate degradation; 2-deoxy-D-ribose 1-phosphate degradation; D-glyceraldehyde 3-phosphate and acetaldehyde from 2-deoxy-alpha-D-ribose 1-phosphate: step 2/2. Functionally, catalyzes a reversible aldol reaction between acetaldehyde and D-glyceraldehyde 3-phosphate to generate 2-deoxy-D-ribose 5-phosphate. The sequence is that of Deoxyribose-phosphate aldolase from Clostridium novyi (strain NT).